The following is a 257-amino-acid chain: Type III pantothenate kinase (257 aa).

24-31 (MIGNSRLH) serves as a coordination point for ATP. Substrate contacts are provided by residues Y96 and 100-103 (GIDR). The active-site Proton acceptor is the D102. D122 contacts K(+). Residue T125 participates in ATP binding. Position 180 (T180) interacts with substrate.

It belongs to the type III pantothenate kinase family. Homodimer. It depends on NH4(+) as a cofactor. K(+) serves as cofactor.

Its subcellular location is the cytoplasm. The enzyme catalyses (R)-pantothenate + ATP = (R)-4'-phosphopantothenate + ADP + H(+). It participates in cofactor biosynthesis; coenzyme A biosynthesis; CoA from (R)-pantothenate: step 1/5. In terms of biological role, catalyzes the phosphorylation of pantothenate (Pan), the first step in CoA biosynthesis. The sequence is that of Type III pantothenate kinase from Synechocystis sp. (strain ATCC 27184 / PCC 6803 / Kazusa).